Reading from the N-terminus, the 1410-residue chain is DNA-directed RNA polymerase subunit beta' (1410 aa).

4 residues coordinate Zn(2+): cysteine 70, cysteine 72, cysteine 85, and cysteine 88. Residues aspartate 460, aspartate 462, and aspartate 464 each coordinate Mg(2+). Residues cysteine 814, cysteine 888, cysteine 895, and cysteine 898 each contribute to the Zn(2+) site.

The protein belongs to the RNA polymerase beta' chain family. In terms of assembly, the RNAP catalytic core consists of 2 alpha, 1 beta, 1 beta' and 1 omega subunit. When a sigma factor is associated with the core the holoenzyme is formed, which can initiate transcription. Mg(2+) serves as cofactor. Requires Zn(2+) as cofactor.

It carries out the reaction RNA(n) + a ribonucleoside 5'-triphosphate = RNA(n+1) + diphosphate. Its function is as follows. DNA-dependent RNA polymerase catalyzes the transcription of DNA into RNA using the four ribonucleoside triphosphates as substrates. This is DNA-directed RNA polymerase subunit beta' from Buchnera aphidicola subsp. Cinara cedri (strain Cc).